The primary structure comprises 421 residues: MAKRTLGLAKAAKAKKQKKEQEHQEISASPDEESSSSNQLTIELPEEIDANNEISQLKGLHKTYLQSERDNELLVNGIIHECDRLLRENDSENKQPLPAVFHAIYAIALAELSKFHTEELDKVKEFFIAALERVELGLEKNPNDINLLVAKTKILLDQISLQYIAPLTLESDVKELDKEIDELLDAALSVYESVEARAKELKDYSIFDDSETLDILEALDDILDIVDNFGKENQGDDGSDEDDDEDDDEEEKSVELAETHPLYKIKNSDKYDQWWRDHTHLYLDNLEKLENGSPELKREVCHRLGQSYLQESEVPYSVFTTLKYDDEYDGIEELEGLTEKEAQKISQELITKALDYLKQAKDEEDPETWVSIAEAMISLGNLYEVDSKEQEDLYLEAEKILKRANNVTNGKFQEELDNLLP.

Disordered stretches follow at residues 1–41 (MAKR…NQLT) and 230–259 (GKEN…LAET). The segment covering 235 to 252 (GDDGSDEDDDEDDDEEEK) has biased composition (acidic residues).

The protein belongs to the ETT1 family.

It localises to the nucleus. In terms of biological role, required for correct translation termination and probably involved in regulation of hypoxic gene expression. The chain is Enhancer of translation termination 1 (ETT1) from Candida albicans (strain WO-1) (Yeast).